We begin with the raw amino-acid sequence, 290 residues long: Bifunctional protein FolD (290 aa).

Residues Gly167 to Ser169, Ser192, and Ile233 contribute to the NADP(+) site.

This sequence belongs to the tetrahydrofolate dehydrogenase/cyclohydrolase family. Homodimer.

The enzyme catalyses (6R)-5,10-methylene-5,6,7,8-tetrahydrofolate + NADP(+) = (6R)-5,10-methenyltetrahydrofolate + NADPH. It catalyses the reaction (6R)-5,10-methenyltetrahydrofolate + H2O = (6R)-10-formyltetrahydrofolate + H(+). It participates in one-carbon metabolism; tetrahydrofolate interconversion. Its function is as follows. Catalyzes the oxidation of 5,10-methylenetetrahydrofolate to 5,10-methenyltetrahydrofolate and then the hydrolysis of 5,10-methenyltetrahydrofolate to 10-formyltetrahydrofolate. This Gloeobacter violaceus (strain ATCC 29082 / PCC 7421) protein is Bifunctional protein FolD.